We begin with the raw amino-acid sequence, 430 residues long: tRNA-2-methylthio-N(6)-dimethylallyladenosine synthase (430 aa).

Residues 1–110 form the MTTase N-terminal domain; sequence MKVHIFTYGC…VPDAVLNAKN (110 aa). Residues Cys-10, Cys-46, Cys-75, Cys-146, Cys-150, and Cys-153 each contribute to the [4Fe-4S] cluster site. The Radical SAM core domain occupies 132-363; sequence RSSNHHAWVT…LNLQKTINKE (232 aa). The TRAM domain maps to 366–427; that stretch reads KSYLGKEVEV…AGPLYGEIKK (62 aa).

This sequence belongs to the methylthiotransferase family. MiaB subfamily. Monomer. It depends on [4Fe-4S] cluster as a cofactor.

The protein resides in the cytoplasm. It catalyses the reaction N(6)-dimethylallyladenosine(37) in tRNA + (sulfur carrier)-SH + AH2 + 2 S-adenosyl-L-methionine = 2-methylsulfanyl-N(6)-dimethylallyladenosine(37) in tRNA + (sulfur carrier)-H + 5'-deoxyadenosine + L-methionine + A + S-adenosyl-L-homocysteine + 2 H(+). In terms of biological role, catalyzes the methylthiolation of N6-(dimethylallyl)adenosine (i(6)A), leading to the formation of 2-methylthio-N6-(dimethylallyl)adenosine (ms(2)i(6)A) at position 37 in tRNAs that read codons beginning with uridine. The chain is tRNA-2-methylthio-N(6)-dimethylallyladenosine synthase from Fervidobacterium nodosum (strain ATCC 35602 / DSM 5306 / Rt17-B1).